Consider the following 457-residue polypeptide: UDP-N-acetylmuramate--L-alanine ligase (457 aa).

ATP is bound at residue 112–118 (GTHGKTT).

The protein belongs to the MurCDEF family.

It is found in the cytoplasm. The enzyme catalyses UDP-N-acetyl-alpha-D-muramate + L-alanine + ATP = UDP-N-acetyl-alpha-D-muramoyl-L-alanine + ADP + phosphate + H(+). The protein operates within cell wall biogenesis; peptidoglycan biosynthesis. In terms of biological role, cell wall formation. The chain is UDP-N-acetylmuramate--L-alanine ligase from Solidesulfovibrio magneticus (strain ATCC 700980 / DSM 13731 / RS-1) (Desulfovibrio magneticus).